A 77-amino-acid polypeptide reads, in one-letter code: Cysteine-rich protein 1 (77 aa).

The LIM zinc-binding domain occupies 2 to 63; the sequence is PKCPKCNKEV…HPCYAAMFGP (62 aa). Lys9 and Lys22 each carry N6-acetyllysine. Arg68 is modified (omega-N-methylarginine).

Seems to have a role in zinc absorption and may function as an intracellular zinc transport protein. The polypeptide is Cysteine-rich protein 1 (CRIP1) (Homo sapiens (Human)).